Here is a 423-residue protein sequence, read N- to C-terminus: Putative transmembrane protein ORF103 (423 aa).

Basic and acidic residues predominate over residues glutamate 43–valine 57. Positions glutamate 43–arginine 91 are disordered. Over residues lysine 67 to glutamate 84 the composition is skewed to acidic residues. Transmembrane regions (helical) follow at residues isoleucine 125–leucine 145 and phenylalanine 162–isoleucine 182. Residues aspartate 253 to lysine 282 are disordered. 2 helical membrane-spanning segments follow: residues leucine 326–serine 346 and isoleucine 366–leucine 386.

It is found in the host membrane. This is Putative transmembrane protein ORF103 from Magallana gigas (Pacific oyster).